The chain runs to 234 residues: LexA repressor (234 aa).

Residues 41–61 (RAEIANELGFKSANAAEEHLQ) constitute a DNA-binding region (H-T-H motif). Catalysis depends on for autocatalytic cleavage activity residues Ser152 and Lys189.

Belongs to the peptidase S24 family. In terms of assembly, homodimer.

It carries out the reaction Hydrolysis of Ala-|-Gly bond in repressor LexA.. Functionally, represses a number of genes involved in the response to DNA damage (SOS response), including recA and lexA. In the presence of single-stranded DNA, RecA interacts with LexA causing an autocatalytic cleavage which disrupts the DNA-binding part of LexA, leading to derepression of the SOS regulon and eventually DNA repair. The polypeptide is LexA repressor (Polaromonas sp. (strain JS666 / ATCC BAA-500)).